The following is a 429-amino-acid chain: Putative zinc metalloprotease aq_1964 (429 aa).

A Zn(2+)-binding site is contributed by His17. Residue Glu18 is part of the active site. His21 serves as a coordination point for Zn(2+). Residues 88–110 form a helical membrane-spanning segment; it reads ILIALGGPLFNFLFTILVFALVY. The PDZ domain occupies 189–265; that stretch reads TIKVPNVQKG…AIKLKILRNG (77 aa). The next 2 helical transmembrane spans lie at 369 to 391 and 406 to 428; these read IFNLIPLPILDGGLILLFAIEWL and RVGLAIIITLTIFVFINDILRLL.

Belongs to the peptidase M50B family. It depends on Zn(2+) as a cofactor.

It localises to the cell inner membrane. The protein is Putative zinc metalloprotease aq_1964 of Aquifex aeolicus (strain VF5).